Reading from the N-terminus, the 948-residue chain is Valine--tRNA ligase (948 aa).

The short motif at 40–50 (PNVTGSLHMGH) is the 'HIGH' region element. Residues 551 to 555 (KMSKS) carry the 'KMSKS' region motif. Residue Lys-554 coordinates ATP. Residues 879–947 (LIDKGAELAR…LAEQHARISS (69 aa)) are a coiled coil.

The protein belongs to the class-I aminoacyl-tRNA synthetase family. ValS type 1 subfamily. Monomer.

It localises to the cytoplasm. The catalysed reaction is tRNA(Val) + L-valine + ATP = L-valyl-tRNA(Val) + AMP + diphosphate. Its function is as follows. Catalyzes the attachment of valine to tRNA(Val). As ValRS can inadvertently accommodate and process structurally similar amino acids such as threonine, to avoid such errors, it has a 'posttransfer' editing activity that hydrolyzes mischarged Thr-tRNA(Val) in a tRNA-dependent manner. The protein is Valine--tRNA ligase of Pseudomonas fluorescens (strain ATCC BAA-477 / NRRL B-23932 / Pf-5).